Here is a 122-residue protein sequence, read N- to C-terminus: Large ribosomal subunit protein uL14 (122 aa).

It belongs to the universal ribosomal protein uL14 family. Part of the 50S ribosomal subunit. Forms a cluster with proteins L3 and L19. In the 70S ribosome, L14 and L19 interact and together make contacts with the 16S rRNA in bridges B5 and B8.

Functionally, binds to 23S rRNA. Forms part of two intersubunit bridges in the 70S ribosome. This chain is Large ribosomal subunit protein uL14, found in Maricaulis maris (strain MCS10) (Caulobacter maris).